Consider the following 226-residue polypeptide: Guanylate kinase (226 aa).

The Guanylate kinase-like domain maps to glycine 13–arginine 193. Alanine 20–threonine 27 contacts ATP.

The protein belongs to the guanylate kinase family.

It is found in the cytoplasm. The enzyme catalyses GMP + ATP = GDP + ADP. Essential for recycling GMP and indirectly, cGMP. The polypeptide is Guanylate kinase (Anaeromyxobacter dehalogenans (strain 2CP-C)).